Reading from the N-terminus, the 537-residue chain is CTP synthase (537 aa).

Residues 1 to 267 (MTKYIFVTGG…DQIVCDHLKL (267 aa)) form an amidoligase domain region. S13 is a CTP binding site. S13 lines the UTP pocket. An ATP-binding site is contributed by 14-19 (SIGKGI). Position 54 (Y54) interacts with L-glutamine. D71 is a binding site for ATP. Residues D71 and E141 each contribute to the Mg(2+) site. Residues 148–150 (DIE), 188–193 (KTKPTQ), and K224 contribute to the CTP site. Residues 188-193 (KTKPTQ) and K224 each bind UTP. 240 to 242 (RDV) serves as a coordination point for ATP. The Glutamine amidotransferase type-1 domain maps to 292-535 (RIALVGKYVE…VTAAVKNKNQ (244 aa)). G354 contributes to the L-glutamine binding site. Catalysis depends on C381, which acts as the Nucleophile; for glutamine hydrolysis. Residues 382–385 (LGMQ), E405, and R463 each bind L-glutamine. Catalysis depends on residues H508 and E510.

It belongs to the CTP synthase family. As to quaternary structure, homotetramer.

The catalysed reaction is UTP + L-glutamine + ATP + H2O = CTP + L-glutamate + ADP + phosphate + 2 H(+). It carries out the reaction L-glutamine + H2O = L-glutamate + NH4(+). It catalyses the reaction UTP + NH4(+) + ATP = CTP + ADP + phosphate + 2 H(+). It participates in pyrimidine metabolism; CTP biosynthesis via de novo pathway; CTP from UDP: step 2/2. With respect to regulation, allosterically activated by GTP, when glutamine is the substrate; GTP has no effect on the reaction when ammonia is the substrate. The allosteric effector GTP functions by stabilizing the protein conformation that binds the tetrahedral intermediate(s) formed during glutamine hydrolysis. Inhibited by the product CTP, via allosteric rather than competitive inhibition. In terms of biological role, catalyzes the ATP-dependent amination of UTP to CTP with either L-glutamine or ammonia as the source of nitrogen. Regulates intracellular CTP levels through interactions with the four ribonucleotide triphosphates. The sequence is that of CTP synthase from Streptococcus equi subsp. zooepidemicus (strain H70).